We begin with the raw amino-acid sequence, 230 residues long: Ribosome biogenesis protein SLX9 homolog (230 aa).

The segment covering Met1–Val11 has biased composition (basic residues). Disordered regions lie at residues Met1 to Gly42 and Leu155 to Gln187. Residues Gly25–Ala38 are compositionally biased toward pro residues. Phosphothreonine is present on Thr34. Positions Arg166–Glu177 are enriched in basic and acidic residues. Ser203 carries the phosphoserine modification.

Belongs to the SLX9 family. As to expression, not detected in any tested tissue.

The protein localises to the nucleus. It localises to the nucleolus. Functionally, may be involved in ribosome biogenesis. The sequence is that of Ribosome biogenesis protein SLX9 homolog from Homo sapiens (Human).